The primary structure comprises 369 residues: MKFVDEVTIDVTAGNGGAGCASFRREKFIPFGGPDGGNGGHGGNIFVVGDRNLNTLIDFRYIRRYTARNGEAGRGSDQFGAAGEDIVLRVPVGTIITDTETGEKIAELLVHDEKILLAKGGDGGFGNLHYKTSTNRAPRQKTPGWPGEVKNLKLELRVLADVGLLGMPNAGKSTLIAAISNARPKIADYPFTTLHPNLGVVRVGPSQSFVVADIPGLIEGASEGAGLGHRFLRHLQRTRVLLHMIDMAPFDDNVDPVAQAKAIVKELKKYDPALYEKPRWLVLNKLDMVPVEQRAALVKDFVKRMRWKGPVFEISALTREGCQGLIHAIYSHVASLQEQPEEVPDPRFTTNEDLSEAAPAPDRDDPRFR.

The 159-residue stretch at 1–159 (MKFVDEVTID…KNLKLELRVL (159 aa)) folds into the Obg domain. The OBG-type G domain occupies 160-334 (ADVGLLGMPN…LIHAIYSHVA (175 aa)). GTP contacts are provided by residues 166-173 (GMPNAGKS), 191-195 (FTTLH), 213-216 (DIPG), 284-287 (NKLD), and 315-317 (SAL). Mg(2+) contacts are provided by serine 173 and threonine 193. The tract at residues 339–369 (QPEEVPDPRFTTNEDLSEAAPAPDRDDPRFR) is disordered.

The protein belongs to the TRAFAC class OBG-HflX-like GTPase superfamily. OBG GTPase family. Monomer. The cofactor is Mg(2+).

It localises to the cytoplasm. Its function is as follows. An essential GTPase which binds GTP, GDP and possibly (p)ppGpp with moderate affinity, with high nucleotide exchange rates and a fairly low GTP hydrolysis rate. Plays a role in control of the cell cycle, stress response, ribosome biogenesis and in those bacteria that undergo differentiation, in morphogenesis control. The sequence is that of GTPase Obg from Leptothrix cholodnii (strain ATCC 51168 / LMG 8142 / SP-6) (Leptothrix discophora (strain SP-6)).